A 139-amino-acid chain; its full sequence is D-ribose pyranase (139 aa).

Histidine 20 functions as the Proton donor in the catalytic mechanism. Residues aspartate 28, histidine 106, and 128–130 (YAN) contribute to the substrate site.

The protein belongs to the RbsD / FucU family. RbsD subfamily. As to quaternary structure, homodecamer.

It is found in the cytoplasm. The catalysed reaction is beta-D-ribopyranose = beta-D-ribofuranose. The protein operates within carbohydrate metabolism; D-ribose degradation; D-ribose 5-phosphate from beta-D-ribopyranose: step 1/2. In terms of biological role, catalyzes the interconversion of beta-pyran and beta-furan forms of D-ribose. The sequence is that of D-ribose pyranase from Salmonella choleraesuis (strain SC-B67).